A 508-amino-acid polypeptide reads, in one-letter code: Cytochrome c-552 (508 aa).

Residues 1–23 (MNKSYKILLTGSVIAIGAMGLMA) form the signal peptide. Heme c is bound at residue His103. The heme site is built by Cys131, Cys134, and Lys135. Positions 169, 172, 173, 211, 214, and 215 each coordinate heme c. Ca(2+) is bound by residues Glu217, Tyr218, Lys274, and Gln276. Substrate is bound at residue Tyr218. Position 277 (His277) interacts with substrate. Heme c is bound by residues His288, Cys295, Cys298, His299, His313, Cys326, Cys329, His330, and His405. The tract at residues 485 to 508 (GRLDPKTLEGMSNKSSWSQTELSQ) is disordered. Polar residues predominate over residues 494 to 508 (GMSNKSSWSQTELSQ).

This sequence belongs to the cytochrome c-552 family. Ca(2+) serves as cofactor. Requires heme c as cofactor.

The protein resides in the periplasm. The enzyme catalyses 6 Fe(III)-[cytochrome c] + NH4(+) + 2 H2O = 6 Fe(II)-[cytochrome c] + nitrite + 8 H(+). It participates in nitrogen metabolism; nitrate reduction (assimilation). In terms of biological role, catalyzes the reduction of nitrite to ammonia, consuming six electrons in the process. This Desulfotalea psychrophila (strain LSv54 / DSM 12343) protein is Cytochrome c-552.